A 163-amino-acid polypeptide reads, in one-letter code: SsrA-binding protein (163 aa).

This sequence belongs to the SmpB family.

Its subcellular location is the cytoplasm. In terms of biological role, required for rescue of stalled ribosomes mediated by trans-translation. Binds to transfer-messenger RNA (tmRNA), required for stable association of tmRNA with ribosomes. tmRNA and SmpB together mimic tRNA shape, replacing the anticodon stem-loop with SmpB. tmRNA is encoded by the ssrA gene; the 2 termini fold to resemble tRNA(Ala) and it encodes a 'tag peptide', a short internal open reading frame. During trans-translation Ala-aminoacylated tmRNA acts like a tRNA, entering the A-site of stalled ribosomes, displacing the stalled mRNA. The ribosome then switches to translate the ORF on the tmRNA; the nascent peptide is terminated with the 'tag peptide' encoded by the tmRNA and targeted for degradation. The ribosome is freed to recommence translation, which seems to be the essential function of trans-translation. This is SsrA-binding protein from Shewanella baltica (strain OS223).